Reading from the N-terminus, the 1040-residue chain is Multidrug resistance protein MdtB (1040 aa).

The next 12 helical transmembrane spans lie at 16 to 36 (FIMR…AGII), 347 to 367 (LMMA…NIPA), 369 to 389 (IIPG…MVFL), 396 to 416 (LTLM…IVVI), 440 to 460 (IGFT…PLLF), 472 to 492 (FAIT…TLTP), 537 to 557 (WLTL…WVFI), 863 to 883 (LGST…VLGI), 888 to 908 (FIHP…ALLA), 911 to 931 (IAGS…IGIV), 968 to 988 (ILMT…STGV), and 998 to 1018 (IGMV…TPVI).

The protein belongs to the resistance-nodulation-cell division (RND) (TC 2.A.6) family. MdtB subfamily. As to quaternary structure, part of a tripartite efflux system composed of MdtA, MdtB and MdtC. MdtB forms a heteromultimer with MdtC.

The protein localises to the cell inner membrane. Functionally, the MdtABC tripartite complex confers resistance against novobiocin and deoxycholate. The protein is Multidrug resistance protein MdtB of Escherichia coli O9:H4 (strain HS).